Reading from the N-terminus, the 275-residue chain is COP9 signalosome complex subunit 7a (275 aa).

N-acetylserine is present on S2. The region spanning 2 to 159 (SAEVKVTGQN…QRLEVDYSIG (158 aa)) is the PCI domain. Positions 185-233 (LSGIEEQVSRANQHKEQQLGLKQQIESEVANLKKTIKVTTAAAAAATSQ) form a coiled coil. The disordered stretch occupies residues 228 to 275 (AAATSQDPEQHLTELREPASGTNQRQPSKKASKGKGLRGSAKIWSKSN). Residues 235-244 (PEQHLTELRE) are compositionally biased toward basic and acidic residues. Positions 254–263 (PSKKASKGKG) are enriched in basic residues.

This sequence belongs to the CSN7/EIF3M family. CSN7 subfamily. Component of the CSN complex, composed of COPS1/GPS1, COPS2, COPS3, COPS4, COPS5, COPS6, COPS7 (COPS7A or COPS7B), COPS8 and COPS9. In the complex, it probably interacts directly with COPS1, COPS2, COPS4, COPS5, COPS6 and COPS8. Interacts with PMF1. Interacts with the translation initiation factor EIF3S6. Interacts with CK2 and PKD. Interacts directly with ID3. In terms of processing, phosphorylated by CK2 and PKD kinases.

It localises to the cytoplasm. Its subcellular location is the nucleus. Functionally, component of the COP9 signalosome complex (CSN), a complex involved in various cellular and developmental processes. The CSN complex is an essential regulator of the ubiquitin (Ubl) conjugation pathway by mediating the deneddylation of the cullin subunits of SCF-type E3 ligase complexes, leading to decrease the Ubl ligase activity of SCF-type complexes such as SCF, CSA or DDB2. The complex is also involved in phosphorylation of p53/TP53, JUN, I-kappa-B-alpha/NFKBIA, ITPK1 and IRF8/ICSBP, possibly via its association with CK2 and PKD kinases. CSN-dependent phosphorylation of TP53 and JUN promotes and protects degradation by the Ubl system, respectively. This Mus musculus (Mouse) protein is COP9 signalosome complex subunit 7a (Cops7a).